Here is a 609-residue protein sequence, read N- to C-terminus: UvrABC system protein C (609 aa).

The region spanning 15–92 (TGSGVYQMQD…IKQFRPRYNV (78 aa)) is the GIY-YIG domain. Residues 202-237 (DQVIIKLTERMEVASENLVFEEAAHYRDQIRQLRRL) enclose the UVR domain.

The protein belongs to the UvrC family. As to quaternary structure, interacts with UvrB in an incision complex.

The protein resides in the cytoplasm. Functionally, the UvrABC repair system catalyzes the recognition and processing of DNA lesions. UvrC both incises the 5' and 3' sides of the lesion. The N-terminal half is responsible for the 3' incision and the C-terminal half is responsible for the 5' incision. In Coxiella burnetii (strain RSA 331 / Henzerling II), this protein is UvrABC system protein C.